The following is a 1025-amino-acid chain: Leucyl-cystinyl aminopeptidase (1025 aa).

At Met1 the chain carries N-acetylmethionine. Residues 1–109 (METFTNDRLQ…DGTCSVPSAR (109 aa)) lie on the Cytoplasmic side of the membrane. The Dileucine internalization motif motif lies at 53 to 54 (LL). Tyr70 carries the phosphotyrosine modification. The Dileucine internalization motif motif lies at 76–77 (LL). Phosphoserine; by PKC/PRKCZ; in vitro is present on residues Ser80 and Ser91. Residues 96-101 (RQSPDG) form a tankyrase binding region. The chain crosses the membrane as a helical; Signal-anchor for type II membrane protein span at residues 110–131 (TLVICVFVIVVAVSVIMVIYLL). Over 132 to 1025 (PRCTFTKEGC…RNLKTLTLWL (894 aa)) the chain is Extracellular. Residues Asn145, Asn184, Asn215, Asn256, and Asn266 are each glycosylated (N-linked (GlcNAc...) asparagine). Glu295 provides a ligand contact to substrate. 2 N-linked (GlcNAc...) asparagine glycosylation sites follow: Asn368 and Asn374. Position 428-432 (428-432 (GAMEN)) interacts with substrate. N-linked (GlcNAc...) asparagine glycosylation occurs at Asn447. His464 contributes to the Zn(2+) binding site. The Proton acceptor role is filled by Glu465. 2 residues coordinate Zn(2+): His468 and Glu487. N-linked (GlcNAc...) asparagine glycosylation is found at Asn525, Asn578, Asn664, Asn682, Asn695, Asn758, Asn834, Asn850, and Asn989.

This sequence belongs to the peptidase M1 family. Homodimer. Binds tankyrases 1 and 2. The cofactor is Zn(2+). In terms of processing, N-glycosylated. Highly expressed in heart, brain, spleen, lung, kidney and white adipose tissue. Detected at lower levels in skeletal muscle and liver.

It is found in the cell membrane. The protein resides in the endomembrane system. It catalyses the reaction Release of an N-terminal amino acid, Cys-|-Xaa-, in which the half-cystine residue is involved in a disulfide loop, notably in oxytocin or vasopressin. Hydrolysis rates on a range of aminoacyl arylamides exceed that for the cystinyl derivative, however.. Release of an N-terminal amino acid, cleave before cysteine, leucine as well as other amino acids. Degrades peptide hormones such as oxytocin, vasopressin and angiotensin III, and plays a role in maintaining homeostasis during pregnancy. May be involved in the inactivation of neuronal peptides in the brain. Cleaves Met-enkephalin and dynorphin. Binds angiotensin IV and may be the angiotensin IV receptor in the brain. This is Leucyl-cystinyl aminopeptidase (Lnpep) from Rattus norvegicus (Rat).